The chain runs to 158 residues: Cystin-1 (158 aa).

Residues 1 to 146 are disordered; the sequence is MGSGSSRSSR…AAISYDHSEE (146 aa). Gly-2 carries N-myristoyl glycine lipidation. 2 stretches are compositionally biased toward low complexity: residues 19–32 and 39–52; these read ESLP…ALEG and PVAA…AAEE. Residues 29–33 carry the Ciliary targeting motif motif; the sequence is ALEGG. Basic and acidic residues predominate over residues 65–75; the sequence is DGRDETLRLLD.

As to quaternary structure, interacts (when myristoylated) with UNC119 and UNC119B; interaction is required for localization to cilium. As to expression, expressed at high levels in the kidney and pancreas. Moderate expression seen in the skeletal muscle, liver and heart. A weak expression seen in the brain, lung, uterus, prostate, testis, small intestine and colon.

The protein resides in the cell projection. It localises to the cilium membrane. It is found in the cytoplasm. Its subcellular location is the cytoskeleton. The protein localises to the cilium axoneme. In Homo sapiens (Human), this protein is Cystin-1 (CYS1).